The chain runs to 387 residues: Chorismate synthase (387 aa).

NADP(+) contacts are provided by arginine 40 and arginine 46. FMN is bound by residues 129–131, 250–251, glycine 295, 310–314, and arginine 336; these read RSS, QA, and KPIPT.

The protein belongs to the chorismate synthase family. As to quaternary structure, homotetramer. The cofactor is FMNH2.

The catalysed reaction is 5-O-(1-carboxyvinyl)-3-phosphoshikimate = chorismate + phosphate. It participates in metabolic intermediate biosynthesis; chorismate biosynthesis; chorismate from D-erythrose 4-phosphate and phosphoenolpyruvate: step 7/7. Functionally, catalyzes the anti-1,4-elimination of the C-3 phosphate and the C-6 proR hydrogen from 5-enolpyruvylshikimate-3-phosphate (EPSP) to yield chorismate, which is the branch point compound that serves as the starting substrate for the three terminal pathways of aromatic amino acid biosynthesis. This reaction introduces a second double bond into the aromatic ring system. This chain is Chorismate synthase, found in Desulforamulus reducens (strain ATCC BAA-1160 / DSM 100696 / MI-1) (Desulfotomaculum reducens).